Here is a 437-residue protein sequence, read N- to C-terminus: Indole diterpene prenyltransferase anaPT (437 aa).

The tract at residues 1-28 (MSPLSMQTDSVQGTAENKSLETNGTSND) is disordered. Residues 102–103 (GF) and E111 contribute to the L-tryptophan site. The dimethylallyl diphosphate site is built by R124, K208, Y210, Y282, Q355, Y357, Y422, and Y426.

It belongs to the tryptophan dimethylallyltransferase family.

The catalysed reaction is (R)-benzodiazepinedione + dimethylallyl diphosphate = (2R,3S,11R)-aszonalenin + diphosphate. It catalyses the reaction (S)-benzodiazepinedione + dimethylallyl diphosphate = (2R,3S,11S)-aszonalenin + diphosphate. The protein operates within alkaloid biosynthesis. Functionally, indole diterpene prenyltransferase; part of the gene cluster that mediates the biosynthesis of the prenylated pyrroloindoline diketopiperazine acetylaszonalenin. The first step in the pathway is the formation of (R)-benzodiazepinedione by condensation of tryptophan and anthranilic acid catalyzed by the non-ribosomal peptide synthetase anaPS. The prenyltransferase anaPT then converts (R)-benzodiazepinedione to aszonalenin in the presence of dimethylallyl diphosphate (DMAPP) via C3-prenylation. The last step in the biosynthesis of acetylaszonalenin via acetylation of aszonalenin at position N1 catalyzed by anaAT. The sequence is that of Indole diterpene prenyltransferase anaPT from Neosartorya fischeri (strain ATCC 1020 / DSM 3700 / CBS 544.65 / FGSC A1164 / JCM 1740 / NRRL 181 / WB 181) (Aspergillus fischerianus).